A 412-amino-acid polypeptide reads, in one-letter code: MMSLSHASVPHTNPTAPHTLAALLAAGGLAGKRVFIRADLNVPQDAAGDITDDTRIRASVPAIAACLQAGAAVMVTSHLGRPQEGAPDPRHSLAPVGRRLSELLGRQVPLLSGWTEGGFQVPPGQVVLLENCRMNTGEKKNSDELAQKMAALCDVYVNDAFGTAHRAEATTHGIARYAPVACAGPLLAAEIDALGKALGQPARPLVAIVAGSKVSTKLTILKSLADKVDNLVVGGGIANTFMLAAGLKIGKSLAEPDLLADARAIIDIMAARGASVPIPVDVVCAKEFSATAAAAVKDVRDVADDDMILDIGPKTAAMLADQLKAAGTIVWNGPVGVFEFDQFGNGTRVLAQAIAESKAFSIAGGGDTLAAIAKYGIADRVGYISTGGGAFLEFLEGKKLPALDVLEQRAAS.

Residues 39–41, Arg-55, 78–81, Arg-133, and Arg-166 each bind substrate; these read DLN and HLGR. ATP contacts are provided by residues Lys-217, Glu-339, and 365 to 368; that span reads GGDT.

It belongs to the phosphoglycerate kinase family. In terms of assembly, monomer.

The protein localises to the cytoplasm. The enzyme catalyses (2R)-3-phosphoglycerate + ATP = (2R)-3-phospho-glyceroyl phosphate + ADP. Its pathway is carbohydrate biosynthesis; Calvin cycle. The chain is Phosphoglycerate kinase, plasmid (cbbKP) from Cupriavidus necator (strain ATCC 17699 / DSM 428 / KCTC 22496 / NCIMB 10442 / H16 / Stanier 337) (Ralstonia eutropha).